Consider the following 114-residue polypeptide: Chaperonin GroEL (114 aa).

Residue 22 to 26 participates in ATP binding; sequence DGTTT.

This sequence belongs to the chaperonin (HSP60) family. In terms of assembly, forms a cylinder of 14 subunits composed of two heptameric rings stacked back-to-back. Interacts with the co-chaperonin GroES.

It is found in the cytoplasm. It carries out the reaction ATP + H2O + a folded polypeptide = ADP + phosphate + an unfolded polypeptide.. Its function is as follows. Together with its co-chaperonin GroES, plays an essential role in assisting protein folding. The GroEL-GroES system forms a nano-cage that allows encapsulation of the non-native substrate proteins and provides a physical environment optimized to promote and accelerate protein folding. The protein is Chaperonin GroEL of Mycobacterium ulcerans.